Consider the following 933-residue polypeptide: Collagen alpha-2(I) chain (933 aa).

Over residues 1–16 the composition is skewed to gly residues; sequence SGGFDFGVGLGPGPMG. Disordered regions lie at residues 1-191 and 206-933; these read SGGF…LTGA and LPGP…AGVR. Low complexity predominate over residues 17 to 53; it reads LMGPRGPPGASGAPGPQGFQGPAGEPGEPGQTGPAGA. 4-hydroxyproline occurs at positions 24 and 30. Residues 57 to 72 show a composition bias toward basic and acidic residues; the sequence is KAGEDGHPGKPGRPGE. 5-hydroxylysine; alternate is present on K94. An O-linked (Gal...) hydroxylysine; alternate glycan is attached at K94. Low complexity-rich tracts occupy residues 108-137, 162-176, and 213-228; these read VGAP…SAGP, AGPR…VSGP, and PGPV…RGLV. Residues 280–289 show a composition bias toward gly residues; that stretch reads GLRGGPGSRG. 2 positions are modified to 4-hydroxyproline: P317 and P320. Residues 413–422 show a composition bias toward gly residues; sequence GVQGGKGEQG. Low complexity-rich tracts occupy residues 468–485 and 497–507; these read PGES…SRGP and EPGVVGAPGTA. A compositionally biased stretch (gly residues) spans 508–517; that stretch reads GPAGSGGLPG. Low complexity-rich tracts occupy residues 540–584, 591–611, and 627–640; these read VGTT…PRGS, VGPA…QPGA, and PTGP…SGPN. Residues 644–656 show a composition bias toward gly residues; sequence GPAGGRGDGGPPG. Residues 657–667 show a composition bias toward low complexity; that stretch reads LTGFPGAAGRT. The segment covering 704–713 has biased composition (gly residues); it reads GETGAGGPPG. 2 stretches are compositionally biased toward low complexity: residues 721–748 and 756–781; these read SGEP…LGLP and LPGV…RGPS. The segment covering 795–807 has biased composition (basic and acidic residues); sequence AGRDGLPGHKGER. Composition is skewed to low complexity over residues 809–831 and 840–860; these read YAGN…VGPA and PGPA…PSGP. The span at 864–874 shows a compositional bias: basic and acidic residues; sequence RGDKGEGDKGP.

Belongs to the fibrillar collagen family. Trimers of one alpha 2(I) and two alpha 1(I) chains. Interacts (via C-terminus) with TMEM131 (via PapD-L domain); the interaction is direct and is involved in assembly and TRAPPIII ER-to-Golgi transport complex-dependent secretion of collagen. In terms of processing, prolines at the third position of the tripeptide repeating unit (G-X-Y) are hydroxylated in some or all of the chains. As to expression, expressed in bones.

The protein localises to the secreted. It is found in the extracellular space. The protein resides in the extracellular matrix. Its function is as follows. Type I collagen is a member of group I collagen (fibrillar forming collagen). This chain is Collagen alpha-2(I) chain, found in Glyptodon sp. (strain SLP-2019) (Giant armadillo).